Reading from the N-terminus, the 37-residue chain is Large ribosomal subunit protein bL36c (37 aa).

The protein belongs to the bacterial ribosomal protein bL36 family.

It localises to the plastid. The protein localises to the chloroplast. This Oenothera argillicola (Appalachian evening primrose) protein is Large ribosomal subunit protein bL36c.